We begin with the raw amino-acid sequence, 439 residues long: IAA-amino acid hydrolase ILR1-like 2 (439 aa).

The signal sequence occupies residues 1–21; the sequence is MALNKLLSLTFQLLLFLLSVS. Residues Cys-137, His-139, Glu-173, His-197, and His-397 each coordinate Mn(2+). The Prevents secretion from ER motif lies at 436–439; sequence HEEL.

Belongs to the peptidase M20 family. In terms of assembly, monomer. Mn(2+) is required as a cofactor. Expressed in leaves, stems, siliques, seeds and flowers. Detected in the distal tips of cotyledons and seedling leaves, hydathodes of leaves from mature plants, pollen, ovules and developing seeds.

It is found in the endoplasmic reticulum lumen. Functionally, hydrolyzes certain amino acid conjugates of the plant growth regulator indole-3-acetic acid (IAA), including IAA-Ala, IAA-Leu, IAA-Met, IAA-Phe, IAA-Ser, IAA-Thr, IAA-Tyr and IAA-Val. Is the most efficient enzyme of the ILL family for IAA-Ala. Not important for IAA-Leu hydrolysis in roots. May act with ILR1 to provide free IAA to germinating seedlings. This is IAA-amino acid hydrolase ILR1-like 2 from Arabidopsis thaliana (Mouse-ear cress).